Consider the following 68-residue polypeptide: Large ribosomal subunit protein bL35 (68 aa).

This sequence belongs to the bacterial ribosomal protein bL35 family.

This chain is Large ribosomal subunit protein bL35, found in Pelagibacter ubique (strain HTCC1062).